Reading from the N-terminus, the 436-residue chain is ATP-dependent protease ATPase subunit HslU (436 aa).

ATP-binding positions include Ile18, 60 to 65 (GVGKTE), Asp249, Glu314, and Arg386.

The protein belongs to the ClpX chaperone family. HslU subfamily. A double ring-shaped homohexamer of HslV is capped on each side by a ring-shaped HslU homohexamer. The assembly of the HslU/HslV complex is dependent on binding of ATP.

Its subcellular location is the cytoplasm. ATPase subunit of a proteasome-like degradation complex; this subunit has chaperone activity. The binding of ATP and its subsequent hydrolysis by HslU are essential for unfolding of protein substrates subsequently hydrolyzed by HslV. HslU recognizes the N-terminal part of its protein substrates and unfolds these before they are guided to HslV for hydrolysis. The chain is ATP-dependent protease ATPase subunit HslU from Chelativorans sp. (strain BNC1).